A 515-amino-acid polypeptide reads, in one-letter code: 1-pyrroline-5-carboxylate dehydrogenase (515 aa).

Catalysis depends on residues Glu286 and Cys320.

The protein belongs to the aldehyde dehydrogenase family. RocA subfamily.

The enzyme catalyses L-glutamate 5-semialdehyde + NAD(+) + H2O = L-glutamate + NADH + 2 H(+). Its pathway is amino-acid degradation; L-proline degradation into L-glutamate; L-glutamate from L-proline: step 2/2. This chain is 1-pyrroline-5-carboxylate dehydrogenase, found in Anoxybacillus flavithermus (strain DSM 21510 / WK1).